A 403-amino-acid chain; its full sequence is Na(+)-translocating NADH-quinone reductase subunit B (403 aa).

Helical transmembrane passes span 56–76, 121–141, 164–184, 225–245, 260–280, 287–307, 312–332, 348–368, and 371–391; these read MMII…YNVG, AYFL…EVLF, LPPS…VVLG, GFAG…NILG, GSMG…LLLT, IVAG…AIGS, MFAM…GMIF, WLFG…NPAF, and GMML…HFVV. Thr230 is subject to FMN phosphoryl threonine.

Belongs to the NqrB/RnfD family. As to quaternary structure, composed of six subunits; NqrA, NqrB, NqrC, NqrD, NqrE and NqrF. The cofactor is FMN.

It is found in the cell inner membrane. The catalysed reaction is a ubiquinone + n Na(+)(in) + NADH + H(+) = a ubiquinol + n Na(+)(out) + NAD(+). NQR complex catalyzes the reduction of ubiquinone-1 to ubiquinol by two successive reactions, coupled with the transport of Na(+) ions from the cytoplasm to the periplasm. NqrA to NqrE are probably involved in the second step, the conversion of ubisemiquinone to ubiquinol. This chain is Na(+)-translocating NADH-quinone reductase subunit B, found in Pseudomonas paraeruginosa (strain DSM 24068 / PA7) (Pseudomonas aeruginosa (strain PA7)).